Reading from the N-terminus, the 426-residue chain is MLDIQLLRTQLDTVAARLAARGYTLDTEAFTALENERKALQTRTQDLQARRNSLSKQVGEAKRRGEDASAVLAEVSGLGDELKANEAALEGLQGRLAELLQAIPNLPHESVPVGRDETGNVEIRRVGVPRSFDFQVKDHVDIGTPLGLDAETGAKLSGARFTVLRGQMARLHRALAQFMLNTHADEHGYTEVYTPYMVNATSMYGTGQLPKFEEDLFRVPRGDENFYLVPTAEVPVTNFVRDEIVKAADLPLRYVAHTPCFRSEAGAYGRDTRGMIRQHQFDKVELVQVVRPEESLNALETLTGHAETILKKLGLPYRVIVLCTGDMGFGSQKTYDIEVWLPAQDTYREISSCSSMGDFQARRMQARFKDEAGKNQLVHTLNGSGLAVGRTLVAVLENYQNADGSVTVPEVLRPYMGGLEKLLPQG.

L-serine is bound at residue 231–233 (TAE). 262 to 264 (RSE) is a binding site for ATP. Residue glutamate 285 participates in L-serine binding. 349 to 352 (EISS) lines the ATP pocket. L-serine is bound at residue serine 384.

Belongs to the class-II aminoacyl-tRNA synthetase family. Type-1 seryl-tRNA synthetase subfamily. In terms of assembly, homodimer. The tRNA molecule binds across the dimer.

It localises to the cytoplasm. It carries out the reaction tRNA(Ser) + L-serine + ATP = L-seryl-tRNA(Ser) + AMP + diphosphate + H(+). It catalyses the reaction tRNA(Sec) + L-serine + ATP = L-seryl-tRNA(Sec) + AMP + diphosphate + H(+). Its pathway is aminoacyl-tRNA biosynthesis; selenocysteinyl-tRNA(Sec) biosynthesis; L-seryl-tRNA(Sec) from L-serine and tRNA(Sec): step 1/1. Functionally, catalyzes the attachment of serine to tRNA(Ser). Is also able to aminoacylate tRNA(Sec) with serine, to form the misacylated tRNA L-seryl-tRNA(Sec), which will be further converted into selenocysteinyl-tRNA(Sec). The protein is Serine--tRNA ligase of Laribacter hongkongensis (strain HLHK9).